The chain runs to 645 residues: MPPPGDQDCARRRSRRRRRDLLLSQLCFLASVALLLWSLSSLREQKELDLMDLIGEDRKWMVGRKLMQVNDTLTSEDAGLQSSKNCTEPALHEFPRDIFSNEDRRQGAVVLHVLCAMYMFYALAIVCDDFFVPSLEKICERLHLSEDVAGATFMAAGSSAPELFTSVIGVFITKGDVGVGTIVGSAVFNILCIIGVCGLFAGQVVALSSWCLLRDSIYYTLSVVALIVFIYDEKVSWWESLVLVLMYLIYIVIMKYNACIHQCFERRTKGAGNMVNGLANNAEIDDSSNCDATVVLLKKANFHRKASVIMVDELLSAYPHQLSFSEAGLRIMITSHFPPKTRLSMASRMLINERQRLINSRAYTNGESEVAIKIPIKHTVENGTGPSSAPDRGVNGTRRDDIVAETDNETENENEDNENNENDEEEEEDEDDDEGPYTPFDPPSGKLETVKWAFTWPLSFVLYFTVPNCNKPHWEKWFMVTFASSTLWIAAFSYMMVWMVTIIGYTLGIPDVIMGITFLAAGTSVPDCMASLIVARQGMGDMAVSNSIGSNVFDILIGLGLPWALQTLAVDYGSYIRLNSRGLIYSVGLLLASVFVTVFGVHLNKWQLDKKLGCGCLFLYGVFLCFSIMTEFNVFTFVNLPMCGD.

Positions 1 to 43 (MPPPGDQDCARRRSRRRRRDLLLSQLCFLASVALLLWSLSSLR) are cleaved as a signal peptide. The Extracellular portion of the chain corresponds to 44–106 (EQKELDLMDL…DIFSNEDRRQ (63 aa)). N-linked (GlcNAc...) asparagine glycans are attached at residues asparagine 70 and asparagine 85. Residues 107–127 (GAVVLHVLCAMYMFYALAIVC) traverse the membrane as a helical segment. Residues 128–151 (DDFFVPSLEKICERLHLSEDVAGA) lie on the Cytoplasmic side of the membrane. Residues 148–188 (VAGATFMAAGSSAPELFTSVIGVFITKGDVGVGTIVGSAVF) form an Alpha-1 repeat. A helical transmembrane segment spans residues 152–172 (TFMAAGSSAPELFTSVIGVFI). Topologically, residues 173-181 (TKGDVGVGT) are extracellular. A helical transmembrane segment spans residues 182-202 (IVGSAVFNILCIIGVCGLFAG). At 203–209 (QVVALSS) the chain is on the cytoplasmic side. Residues 210-230 (WCLLRDSIYYTLSVVALIVFI) traverse the membrane as a helical segment. Topologically, residues 231 to 234 (YDEK) are extracellular. The helical transmembrane segment at 235-255 (VSWWESLVLVLMYLIYIVIMK) threads the bilayer. The Cytoplasmic segment spans residues 256 to 486 (YNACIHQCFE…WFMVTFASST (231 aa)). Residue serine 307 is modified to Phosphoserine. Disordered regions lie at residues 379-398 (TVEN…NGTR) and 404-442 (AETD…PFDP). Positions 404 to 435 (AETDNETENENEDNENNENDEEEEEDEDDDEG) are enriched in acidic residues. Residues 487-507 (LWIAAFSYMMVWMVTIIGYTL) traverse the membrane as a helical segment. Residues 508 to 512 (GIPDV) lie on the Extracellular side of the membrane. A helical transmembrane segment spans residues 513–533 (IMGITFLAAGTSVPDCMASLI). Residues 520 to 551 (AAGTSVPDCMASLIVARQGMGDMAVSNSIGSN) form an Alpha-2 repeat. Residues 534–551 (VARQGMGDMAVSNSIGSN) lie on the Cytoplasmic side of the membrane. A helical membrane pass occupies residues 552-572 (VFDILIGLGLPWALQTLAVDY). Topologically, residues 573–582 (GSYIRLNSRG) are extracellular. Residues 583-603 (LIYSVGLLLASVFVTVFGVHL) form a helical membrane-spanning segment. The Cytoplasmic portion of the chain corresponds to 604-617 (NKWQLDKKLGCGCL). Residues 618–638 (FLYGVFLCFSIMTEFNVFTFV) form a helical membrane-spanning segment. Topologically, residues 639–645 (NLPMCGD) are extracellular.

The protein belongs to the Ca(2+):cation antiporter (CaCA) (TC 2.A.19) family. SLC24A subfamily. In terms of tissue distribution, abundant in the brain. Highest levels found in selected thalamic nuclei, hippocampal CA1 neurons and in layer IV of the cerebral cortex. Expressed in dental tissues.

The protein localises to the cell membrane. The catalysed reaction is Ca(2+)(out) + K(+)(out) + 4 Na(+)(in) = Ca(2+)(in) + K(+)(in) + 4 Na(+)(out). Calcium, potassium:sodium antiporter that transports 1 Ca(2+) and 1 K(+) in exchange for 4 Na(+). The chain is Sodium/potassium/calcium exchanger 3 (Slc24a3) from Mus musculus (Mouse).